A 244-amino-acid polypeptide reads, in one-letter code: Orotidine 5'-phosphate decarboxylase (244 aa).

Substrate-binding positions include Asp10, Lys32, 59 to 68, Thr122, Arg184, Gln193, Gly213, and Arg214; that span reads DLKLHDIPNT. Lys61 acts as the Proton donor in catalysis.

The protein belongs to the OMP decarboxylase family. Type 1 subfamily. Homodimer.

The catalysed reaction is orotidine 5'-phosphate + H(+) = UMP + CO2. It functions in the pathway pyrimidine metabolism; UMP biosynthesis via de novo pathway; UMP from orotate: step 2/2. Catalyzes the decarboxylation of orotidine 5'-monophosphate (OMP) to uridine 5'-monophosphate (UMP). In Geobacillus kaustophilus (strain HTA426), this protein is Orotidine 5'-phosphate decarboxylase.